Here is a 56-residue protein sequence, read N- to C-terminus: Large ribosomal subunit protein bL32 (56 aa).

The span at 1 to 16 (MAVQKSKKSRARRGMR) shows a compositional bias: basic residues. The tract at residues 1-56 (MAVQKSKKSRARRGMRRSHDAISGPSLTVDQTSGETHRRHHVTADGYYKGVQVISK) is disordered. A compositionally biased stretch (polar residues) spans 25–34 (PSLTVDQTSG).

This sequence belongs to the bacterial ribosomal protein bL32 family.

The chain is Large ribosomal subunit protein bL32 from Pseudoalteromonas translucida (strain TAC 125).